The sequence spans 235 residues: Class A basic helix-loop-helix protein 9 (235 aa).

Disordered regions lie at residues 1 to 69 and 132 to 235; these read MLRG…RRMA and GHLE…HPRS. Over residues 55-67 the composition is skewed to basic residues; that stretch reads RRRARPVRSKARR. The bHLH domain occupies 65–117; sequence ARRMAANVRERKRILDYNEAFNALRRALRHDLGGKRLSKIATLRRAIHRIAAL.

Heterodimer. Efficient DNA binding requires dimerization with another bHLH protein. Interacts with TCF3, TCF4, and TCF12.

It is found in the nucleus. The protein localises to the cytoplasm. Functionally, transcription factor, which play a role in limb development. Is an essential player in the regulatory network governing transcription of genes implicated in limb morphogenesis. This Homo sapiens (Human) protein is Class A basic helix-loop-helix protein 9 (BHLHA9).